We begin with the raw amino-acid sequence, 116 residues long: Large ribosomal subunit protein bL17 (116 aa).

This sequence belongs to the bacterial ribosomal protein bL17 family. Part of the 50S ribosomal subunit. Contacts protein L32.

The protein is Large ribosomal subunit protein bL17 of Rippkaea orientalis (strain PCC 8801 / RF-1) (Cyanothece sp. (strain PCC 8801)).